Reading from the N-terminus, the 93-residue chain is Early E3A 10.5 kDa glycoprotein (93 aa).

Residue Asn-3 is glycosylated (N-linked (GlcNAc...) asparagine; by host). The helical transmembrane segment at 34–55 (MWWFSIALMFVCLIIMWLICCL) threads the bilayer.

It belongs to the adenoviridae E3A-1 family. Post-translationally, N-glycosylated and probably also O-glycosylated.

The protein localises to the host nucleus membrane. This chain is Early E3A 10.5 kDa glycoprotein, found in Homo sapiens (Human).